The primary structure comprises 72 residues: Exodeoxyribonuclease 7 small subunit (72 aa).

Belongs to the XseB family. Heterooligomer composed of large and small subunits.

It localises to the cytoplasm. The enzyme catalyses Exonucleolytic cleavage in either 5'- to 3'- or 3'- to 5'-direction to yield nucleoside 5'-phosphates.. Bidirectionally degrades single-stranded DNA into large acid-insoluble oligonucleotides, which are then degraded further into small acid-soluble oligonucleotides. This Clostridium kluyveri (strain NBRC 12016) protein is Exodeoxyribonuclease 7 small subunit.